The chain runs to 284 residues: Bifunctional protein FolD (284 aa).

NADP(+) contacts are provided by residues Gly-166–Ser-168 and Ile-232.

This sequence belongs to the tetrahydrofolate dehydrogenase/cyclohydrolase family. As to quaternary structure, homodimer.

It carries out the reaction (6R)-5,10-methylene-5,6,7,8-tetrahydrofolate + NADP(+) = (6R)-5,10-methenyltetrahydrofolate + NADPH. The enzyme catalyses (6R)-5,10-methenyltetrahydrofolate + H2O = (6R)-10-formyltetrahydrofolate + H(+). Its pathway is one-carbon metabolism; tetrahydrofolate interconversion. Its function is as follows. Catalyzes the oxidation of 5,10-methylenetetrahydrofolate to 5,10-methenyltetrahydrofolate and then the hydrolysis of 5,10-methenyltetrahydrofolate to 10-formyltetrahydrofolate. This chain is Bifunctional protein FolD, found in Shewanella sp. (strain W3-18-1).